The sequence spans 580 residues: WD repeat-containing protein 46 (580 aa).

Residues 34–108 (SWKEYKKMKQ…QQEKMKVTKD (75 aa)) are disordered. Basic and acidic residues-rich tracts occupy residues 64 to 85 (TEGR…HDTG) and 98 to 108 (LQQEKMKVTKD). WD repeat units lie at residues 193 to 234 (AALD…YTYV), 235 to 272 (YDNL…NSFL), 274 to 312 (YVDV…HTNG), 315 to 354 (SLWS…GLDR), 357 to 396 (RIWD…NHVQ), and 399 to 436 (RGMH…IGHA).

As to quaternary structure, part of the small subunit (SSU) processome.

It localises to the nucleus. The protein resides in the nucleolus. In terms of biological role, scaffold component of the nucleolar structure. Part of the small subunit (SSU) processome, first precursor of the small eukaryotic ribosomal subunit. Required for 18S rRNA processing. Plays a role in negative regulation of detoxification genes by inhibiting protein levels of transcription factor skn-1, leading to down-regulation of skn-1 target genes. This Caenorhabditis elegans protein is WD repeat-containing protein 46.